The sequence spans 332 residues: Adenosine deaminase (332 aa).

Zn(2+) contacts are provided by H12 and H14. Substrate contacts are provided by H14, D16, and G170. H197 contacts Zn(2+). The Proton donor role is filled by E200. Zn(2+) is bound at residue D278.

This sequence belongs to the metallo-dependent hydrolases superfamily. Adenosine and AMP deaminases family. Adenosine deaminase subfamily. Zn(2+) is required as a cofactor.

It catalyses the reaction adenosine + H2O + H(+) = inosine + NH4(+). The catalysed reaction is 2'-deoxyadenosine + H2O + H(+) = 2'-deoxyinosine + NH4(+). In terms of biological role, catalyzes the hydrolytic deamination of adenosine and 2-deoxyadenosine. This Clostridium perfringens (strain SM101 / Type A) protein is Adenosine deaminase.